A 314-amino-acid polypeptide reads, in one-letter code: Ribosomal RNA small subunit methyltransferase H (314 aa).

S-adenosyl-L-methionine-binding positions include 36-38 (GGH), Asp56, Phe80, Asp102, and Gln109. The segment at 278 to 300 (GGRSLKSIGKMKPSEEEVADNPR) is disordered. A compositionally biased stretch (basic and acidic residues) spans 289 to 300 (KPSEEEVADNPR).

The protein belongs to the methyltransferase superfamily. RsmH family.

The protein resides in the cytoplasm. The catalysed reaction is cytidine(1402) in 16S rRNA + S-adenosyl-L-methionine = N(4)-methylcytidine(1402) in 16S rRNA + S-adenosyl-L-homocysteine + H(+). Functionally, specifically methylates the N4 position of cytidine in position 1402 (C1402) of 16S rRNA. This chain is Ribosomal RNA small subunit methyltransferase H, found in Photorhabdus laumondii subsp. laumondii (strain DSM 15139 / CIP 105565 / TT01) (Photorhabdus luminescens subsp. laumondii).